The chain runs to 687 residues: Glycine--tRNA ligase beta subunit (687 aa).

Belongs to the class-II aminoacyl-tRNA synthetase family. In terms of assembly, tetramer of two alpha and two beta subunits.

It is found in the cytoplasm. The catalysed reaction is tRNA(Gly) + glycine + ATP = glycyl-tRNA(Gly) + AMP + diphosphate. The polypeptide is Glycine--tRNA ligase beta subunit (Geobacter sp. (strain M21)).